A 691-amino-acid polypeptide reads, in one-letter code: Elongation factor G (691 aa).

One can recognise a tr-type G domain in the interval Glu8–Val282. GTP contacts are provided by residues Ala17–Thr24, Asp81–His85, and Asn135–Asp138.

The protein belongs to the TRAFAC class translation factor GTPase superfamily. Classic translation factor GTPase family. EF-G/EF-2 subfamily.

The protein resides in the cytoplasm. Catalyzes the GTP-dependent ribosomal translocation step during translation elongation. During this step, the ribosome changes from the pre-translocational (PRE) to the post-translocational (POST) state as the newly formed A-site-bound peptidyl-tRNA and P-site-bound deacylated tRNA move to the P and E sites, respectively. Catalyzes the coordinated movement of the two tRNA molecules, the mRNA and conformational changes in the ribosome. This Prochlorococcus marinus (strain AS9601) protein is Elongation factor G.